The chain runs to 143 residues: Large ribosomal subunit protein uL15 (143 aa).

Composition is skewed to basic residues over residues Met1–Gly13 and Lys23–Gly38. A disordered region spans residues Met1–Gly38.

Belongs to the universal ribosomal protein uL15 family. As to quaternary structure, part of the 50S ribosomal subunit.

Its function is as follows. Binds to the 23S rRNA. The chain is Large ribosomal subunit protein uL15 from Methanococcus vannielii.